We begin with the raw amino-acid sequence, 1121 residues long: Transcription factor CSR2 (1121 aa).

Phosphoserine occurs at positions 23, 46, and 127. Disordered stretches follow at residues 273 to 342 (PLHT…RSLP), 513 to 532 (HTQL…PQKL), 579 to 600 (LKRN…GLAM), and 837 to 860 (IPQD…LQTS). A compositionally biased stretch (polar residues) spans 276–310 (TQRTSPSNTARTGNAMDTSNSDRASPASNNNTTDA). Composition is skewed to low complexity over residues 318 to 329 (NNNPMNNNNSPA), 519 to 529 (SRPRSSSISSP), and 582 to 597 (NNSN…SSSG). S327 carries the phosphoserine modification. A compositionally biased stretch (basic and acidic residues) spans 837–846 (IPQDKNHNEV). K841 is covalently cross-linked (Glycyl lysine isopeptide (Lys-Gly) (interchain with G-Cter in ubiquitin)). The segment covering 847–860 (NDTNGNSNTSLQTS) has biased composition (polar residues). Phosphoserine is present on S987. A compositionally biased stretch (polar residues) spans 999–1009 (KTTAVSDSSNG). Disordered regions lie at residues 999 to 1022 (KTTA…QARP) and 1075 to 1121 (TPRY…EISS). A compositionally biased stretch (low complexity) spans 1084–1093 (TNTDYNYNDN).

This sequence belongs to the CSR2 family. In terms of processing, phosphorylated by CDC28.

The protein localises to the cytoplasm. The protein resides in the nucleus. Functionally, transcription factor involved in the regulation of fermentation and aerobic oxidation. Acts as a repressor of CYC1, which is involved in electron flow through the mitochondria under aerobic condition. Required for pseudohyphal formation upon nitrogen starvation. May be involved in viability at stationary phase and aging. The chain is Transcription factor CSR2 (CSR2) from Saccharomyces cerevisiae (strain ATCC 204508 / S288c) (Baker's yeast).